The following is a 273-amino-acid chain: NADPH-dependent 7-cyano-7-deazaguanine reductase (273 aa).

80–82 lines the substrate pocket; that stretch reads IES. 82 to 83 contacts NADPH; that stretch reads SK. Cysteine 180 acts as the Thioimide intermediate in catalysis. Aspartate 187 functions as the Proton donor in the catalytic mechanism. 219-220 provides a ligand contact to substrate; the sequence is HE. Residue 248–249 participates in NADPH binding; the sequence is RG.

The protein belongs to the GTP cyclohydrolase I family. QueF type 2 subfamily. In terms of assembly, homodimer.

Its subcellular location is the cytoplasm. It carries out the reaction 7-aminomethyl-7-carbaguanine + 2 NADP(+) = 7-cyano-7-deazaguanine + 2 NADPH + 3 H(+). It participates in tRNA modification; tRNA-queuosine biosynthesis. In terms of biological role, catalyzes the NADPH-dependent reduction of 7-cyano-7-deazaguanine (preQ0) to 7-aminomethyl-7-deazaguanine (preQ1). This chain is NADPH-dependent 7-cyano-7-deazaguanine reductase, found in Bordetella avium (strain 197N).